The primary structure comprises 311 residues: tRNA-cytidine(32) 2-sulfurtransferase (311 aa).

Residues 47–52 (SGGKDS) carry the PP-loop motif motif. Positions 122, 125, and 213 each coordinate [4Fe-4S] cluster.

Belongs to the TtcA family. In terms of assembly, homodimer. Mg(2+) serves as cofactor. The cofactor is [4Fe-4S] cluster.

The protein resides in the cytoplasm. It carries out the reaction cytidine(32) in tRNA + S-sulfanyl-L-cysteinyl-[cysteine desulfurase] + AH2 + ATP = 2-thiocytidine(32) in tRNA + L-cysteinyl-[cysteine desulfurase] + A + AMP + diphosphate + H(+). Its pathway is tRNA modification. Its function is as follows. Catalyzes the ATP-dependent 2-thiolation of cytidine in position 32 of tRNA, to form 2-thiocytidine (s(2)C32). The sulfur atoms are provided by the cysteine/cysteine desulfurase (IscS) system. The chain is tRNA-cytidine(32) 2-sulfurtransferase from Escherichia coli O139:H28 (strain E24377A / ETEC).